Here is a 157-residue protein sequence, read N- to C-terminus: Aspartate carbamoyltransferase regulatory chain (157 aa).

The Zn(2+) site is built by Cys-108, Cys-113, Cys-138, and Cys-141.

Belongs to the PyrI family. As to quaternary structure, contains catalytic and regulatory chains. Zn(2+) serves as cofactor.

Its function is as follows. Involved in allosteric regulation of aspartate carbamoyltransferase. The protein is Aspartate carbamoyltransferase regulatory chain of Ignicoccus hospitalis (strain KIN4/I / DSM 18386 / JCM 14125).